The chain runs to 597 residues: Elongation factor 4 (597 aa).

A tr-type G domain is found at 4-181 (SKIRNFSIIA…AIVDYVPAPK (178 aa)). Residues 16-21 (DHGKST) and 128-131 (NKID) each bind GTP.

The protein belongs to the TRAFAC class translation factor GTPase superfamily. Classic translation factor GTPase family. LepA subfamily.

The protein resides in the cell membrane. The catalysed reaction is GTP + H2O = GDP + phosphate + H(+). Required for accurate and efficient protein synthesis under certain stress conditions. May act as a fidelity factor of the translation reaction, by catalyzing a one-codon backward translocation of tRNAs on improperly translocated ribosomes. Back-translocation proceeds from a post-translocation (POST) complex to a pre-translocation (PRE) complex, thus giving elongation factor G a second chance to translocate the tRNAs correctly. Binds to ribosomes in a GTP-dependent manner. The chain is Elongation factor 4 from Mycoplasmopsis agalactiae (strain NCTC 10123 / CIP 59.7 / PG2) (Mycoplasma agalactiae).